A 66-amino-acid chain; its full sequence is Large ribosomal subunit protein uL30 (66 aa).

The protein belongs to the universal ribosomal protein uL30 family. As to quaternary structure, part of the 50S ribosomal subunit.

The sequence is that of Large ribosomal subunit protein uL30 from Chloroherpeton thalassium (strain ATCC 35110 / GB-78).